The sequence spans 459 residues: mRNA-capping enzyme subunit alpha (459 aa).

Lys70 serves as the catalytic N6-GMP-lysine intermediate. The tract at residues 415-459 is disordered; sequence MAGGSGRPLPSQSQNATLSTSKPVHSQPPSNDKEPKYVDEDDWSD. Positions 424–444 are enriched in polar residues; it reads PSQSQNATLSTSKPVHSQPPS.

This sequence belongs to the eukaryotic GTase family. In terms of assembly, heterodimer. The mRNA-capping enzyme is composed of two separate chains alpha and beta, respectively a mRNA guanylyltransferase and an mRNA 5'-triphosphate monophosphatase.

Its subcellular location is the nucleus. It catalyses the reaction a 5'-end diphospho-ribonucleoside in mRNA + GTP + H(+) = a 5'-end (5'-triphosphoguanosine)-ribonucleoside in mRNA + diphosphate. Second step of mRNA capping. Transfer of the GMP moiety of GTP to the 5'-diphosphate terminus of RNA via a covalent enzyme-GMP reaction intermediate. The protein is mRNA-capping enzyme subunit alpha (CEG1) of Saccharomyces cerevisiae (strain ATCC 204508 / S288c) (Baker's yeast).